The primary structure comprises 201 residues: Small ribosomal subunit protein uS5 (201 aa).

Residues 1–28 (MARGEQQRGEGGQRRDRRDRNAPEERVD) form a disordered region. Residues 31–94 (IVEKLVHINR…EEAKKTMIRV (64 aa)) enclose the S5 DRBM domain. A disordered region spans residues 173 to 201 (QIAAKRGKKVGDILGRRADGASAPEAIEG). Residues 181–191 (KVGDILGRRAD) show a composition bias toward basic and acidic residues.

Belongs to the universal ribosomal protein uS5 family. As to quaternary structure, part of the 30S ribosomal subunit. Contacts proteins S4 and S8.

In terms of biological role, with S4 and S12 plays an important role in translational accuracy. Functionally, located at the back of the 30S subunit body where it stabilizes the conformation of the head with respect to the body. The protein is Small ribosomal subunit protein uS5 of Caulobacter vibrioides (strain ATCC 19089 / CIP 103742 / CB 15) (Caulobacter crescentus).